We begin with the raw amino-acid sequence, 738 residues long: Conserved oligomeric Golgi complex subunit 4 (738 aa).

The protein belongs to the COG4 family. As to quaternary structure, component of the conserved oligomeric Golgi complex which is composed of eight different subunits and is required for normal Golgi morphology and localization. Interacts with COG2 and COG3.

Its subcellular location is the golgi apparatus membrane. Required for normal Golgi function. This chain is Conserved oligomeric Golgi complex subunit 4, found in Arabidopsis thaliana (Mouse-ear cress).